Reading from the N-terminus, the 95-residue chain is uncharacterized protein (95 aa).

This is an uncharacterized protein from Dictyostelium discoideum (Social amoeba).